A 583-amino-acid chain; its full sequence is 2-succinyl-5-enolpyruvyl-6-hydroxy-3-cyclohexene-1-carboxylate synthase (583 aa).

The protein belongs to the TPP enzyme family. MenD subfamily. As to quaternary structure, homodimer. Mg(2+) serves as cofactor. It depends on Mn(2+) as a cofactor. Thiamine diphosphate is required as a cofactor.

It catalyses the reaction isochorismate + 2-oxoglutarate + H(+) = 5-enolpyruvoyl-6-hydroxy-2-succinyl-cyclohex-3-ene-1-carboxylate + CO2. It functions in the pathway quinol/quinone metabolism; 1,4-dihydroxy-2-naphthoate biosynthesis; 1,4-dihydroxy-2-naphthoate from chorismate: step 2/7. The protein operates within quinol/quinone metabolism; menaquinone biosynthesis. Its function is as follows. Catalyzes the thiamine diphosphate-dependent decarboxylation of 2-oxoglutarate and the subsequent addition of the resulting succinic semialdehyde-thiamine pyrophosphate anion to isochorismate to yield 2-succinyl-5-enolpyruvyl-6-hydroxy-3-cyclohexene-1-carboxylate (SEPHCHC). In Chlorobaculum parvum (strain DSM 263 / NCIMB 8327) (Chlorobium vibrioforme subsp. thiosulfatophilum), this protein is 2-succinyl-5-enolpyruvyl-6-hydroxy-3-cyclohexene-1-carboxylate synthase.